Reading from the N-terminus, the 215-residue chain is HTH-type transcriptional regulator for conjugative element R391 (215 aa).

The HTH cro/C1-type domain maps to 8 to 61 (LNHALQLTGVTQSELARRIGIKQQSISQICSGKSARSRYTMQIAEALRVNAHWL). Residues 19–38 (QSELARRIGIKQQSISQICS) constitute a DNA-binding region (H-T-H motif).

Functionally, may control the expression of the integrase and inhibit excision of the mobile element R391, and regulate the expression of other genes as well. The protein is HTH-type transcriptional regulator for conjugative element R391 of Providencia rettgeri.